An 80-amino-acid chain; its full sequence is uncharacterized protein (80 aa).

The chain crosses the membrane as a helical span at residues 12–32; sequence FKIIALILLIVLIINLSYKLF.

Its subcellular location is the membrane. This is an uncharacterized protein from Saccharomyces cerevisiae (strain ATCC 204508 / S288c) (Baker's yeast).